The chain runs to 368 residues: Glutaminyl-peptide cyclotransferase (368 aa).

The first 23 residues, 1–23, serve as a signal peptide directing secretion; sequence MAGERRDSKAAAFFCLAWALCLA. Asparagine 53 carries N-linked (GlcNAc...) asparagine glycosylation. A disulfide bridge links cysteine 143 with cysteine 169. Zn(2+) is bound at residue aspartate 164. The active-site Proton acceptor is glutamate 207. A Zn(2+)-binding site is contributed by glutamate 208. Aspartate 254 serves as the catalytic Proton acceptor. Asparagine 292 carries N-linked (GlcNAc...) asparagine glycosylation. Histidine 336 is a binding site for Zn(2+). Asparagine 352 is a glycosylation site (N-linked (GlcNAc...) asparagine).

It belongs to the glutaminyl-peptide cyclotransferase family. In terms of tissue distribution, expressed by the venom gland.

Its subcellular location is the secreted. The catalysed reaction is N-terminal L-glutaminyl-[peptide] = N-terminal 5-oxo-L-prolyl-[peptide] + NH4(+). In terms of biological role, responsible for the biosynthesis of pyroglutamyl peptides. Has a bias against acidic and tryptophan residues adjacent to the N-terminal glutaminyl residue and a lack of importance of chain length after the second residue. Also catalyzes N-terminal pyroglutamate formation. This is Glutaminyl-peptide cyclotransferase (QPCT) from Boiga dendrophila (Mangrove snake).